Consider the following 143-residue polypeptide: Ribosome-binding factor A (143 aa).

The tract at residues 117–143 (DAEIARRSQGAMPAGEADPYRHSDEEE) is disordered. Positions 134–143 (DPYRHSDEEE) are enriched in basic and acidic residues.

Belongs to the RbfA family. As to quaternary structure, monomer. Binds 30S ribosomal subunits, but not 50S ribosomal subunits or 70S ribosomes.

It localises to the cytoplasm. Functionally, one of several proteins that assist in the late maturation steps of the functional core of the 30S ribosomal subunit. Associates with free 30S ribosomal subunits (but not with 30S subunits that are part of 70S ribosomes or polysomes). Required for efficient processing of 16S rRNA. May interact with the 5'-terminal helix region of 16S rRNA. The polypeptide is Ribosome-binding factor A (Cutibacterium acnes (strain DSM 16379 / KPA171202) (Propionibacterium acnes)).